Consider the following 590-residue polypeptide: Ovarian abundant message protein (590 aa).

The segment at 1-71 (MQGTDNAPPG…SPGQPLVEEQ (71 aa)) is disordered. Over residues 18–29 (SPRRIRHVRRHY) the composition is skewed to basic residues. A run of 27 repeats spans residues 66-71 (PLVEEQ), 72-77 (PLVEER), 78-83 (PPVEEQ), 84-89 (PLVEEQ), 90-95 (PLVEEQ), 96-101 (PLVEEQ), 102-107 (PLVEEQ), 108-113 (PLVEGQ), 114-119 (PLVEEQ), 120-125 (PLVEGQ), 126-131 (PPVEGQ), 132-137 (PLVEEQ), 138-143 (PLVEGQ), 144-149 (PLVEGQ), 150-155 (PLVEGQ), 156-161 (PLVEGQ), 162-167 (PLVGGQ), 168-173 (PLVGGQ), 174-179 (PLVEGQ), 180-185 (PLVEGQ), 300-305 (PLAGAP), 306-311 (PLAGVP), 312-317 (PLAVAL), 318-323 (PLAGAP), 324-329 (PLAGVP), 330-335 (PLAGAP), and 336-341 (PLAGAL). A 20 X 6 AA tandem repeats of P-[LP]-V-[EG]-[EG]-[QR] region spans residues 66-185 (PLVEEQPLVE…VEGQPLVEGQ (120 aa)). The segment at 300–347 (PLAGAPPLAGVPPLAVALPLAGAPPLAGVPPLAGAPPLAGALPRAGVL) is 8 X 6 AA approximate tandem repeats of P-L-A-[GV]-[AV]-[PL]. A 2-8; approximate repeat occupies 342 to 347 (PRAGVL). 16 consecutive repeat copies span residues 348–353 (RRAGVL), 354–359 (RRAGVL), 360–365 (RRAGVL), 366–371 (RRAGVL), 372–377 (RRAGVL), 378–383 (RRAGVL), 384–389 (RRAGVL), 390–395 (RRAGVL), 396–401 (RRAGVL), 402–407 (RRADVL), 408–413 (RRADVV), 419–424 (QQLADV), 425–430 (QRLADV), 431–436 (QRLADV), 437–442 (QRLADV), and 443–448 (QRLADV). Residues 348-413 (RRAGVLRRAG…ADVLRRADVV (66 aa)) form an 11 X 6 AA tandem repeats of approximate R-R-A-[GD]-V-[LV] region. A 6 X 6 AA approximate tandem repeats of Q-[QR]-L-A-D-V region spans residues 419-454 (QQLADVQRLADVQRLADVQRLADVQRLADVQRLVCV). Residues 449–454 (QRLVCV) form a 4-6; approximate repeat.

As to expression, somatic ovarian tissue.

This chain is Ovarian abundant message protein (OAM), found in Ascaris suum (Pig roundworm).